The primary structure comprises 505 residues: Peroxisome proliferator-activated receptor gamma (505 aa).

Threonine 84 carries O-linked (GlcNAc) threonine glycosylation. Serine 112 carries the post-translational modification Phosphoserine; by MAPK. A DNA-binding region (nuclear receptor) is located at residues 136-210; it reads AIECRVCGDK…VGMSHNAIRF (75 aa). 2 NR C4-type zinc fingers span residues 139-159 and 176-198; these read CRVC…CEGC and CDLN…FQKC. Positions 205–280 are interaction with FAM120B; sequence HNAIRFGRMP…DKSPFVIYDM (76 aa). The region spanning 238 to 503 is the NR LBD domain; it reads DLRALAKHLY…HPLLQEIYKD (266 aa). Residue lysine 252 forms a Glycyl lysine isopeptide (Lys-Gly) (interchain with G-Cter in ubiquitin) linkage. The short motif at 495–503 is the 9aaTAD element; sequence PLLQEIYKD.

The protein belongs to the nuclear hormone receptor family. NR1 subfamily. As to quaternary structure, interacts with FOXO1 (acetylated form). Heterodimer with other nuclear receptors, such as RXRA. The heterodimer with the retinoic acid receptor RXRA is called adipocyte-specific transcription factor ARF6. Interacts with NCOA6 coactivator, leading to a strong increase in transcription of target genes. Interacts with coactivator PPARBP, leading to a mild increase in transcription of target genes. Interacts with NOCA7 in a ligand-inducible manner. Interacts with NCOA1 and NCOA2 LXXLL motifs. Interacts with ASXL1, ASXL2, DNTTIP2, FAM120B, MAP2K1/MEK1, NR0B2, PDPK1, PRDM16, PRMT2 and TGFB1I1. Interacts (when activated by agonist) with PPP5C. Interacts with HELZ2 and THRAP3; the interaction stimulates the transcriptional activity of PPARG. Interacts with PER2, the interaction is ligand dependent and blocks PPARG recruitment to target promoters. Interacts with NOCT. Interacts with ACTN4. Interacts (when in the liganded conformation) with GPS2. Interacts with CRY1 and CRY2 in a ligand-dependent manner. In the absence of hormonal ligand, interacts with TACC1. In macrophages, interacts with PAQR3 and STUB1; the interactions promote PPARG poylubiquitination and STUB1-mediated degradation. Phosphorylated by MAPK. The phosphorylation inhibits PPAR gamma activity. In terms of processing, O-GlcNAcylation at Thr-84 reduces transcriptional activity in adipocytes. Post-translationally, phosphorylated at basal conditions and dephosphorylated when treated with the ligand. May be dephosphorylated by PPP5C. The phosphorylated form may be inactive and dephosphorylation at induces adipogenic activity. Ubiquitinated by E3 ubiquitin-protein ligase complex containing FBXO9; leading to proteasomal degradation. Ubiquitinated at Lys-252 by TRIM55 leading to proteasomal degradation. Ubiquitinated by E3 ubiquitin-protein ligase STUB1/CHIP; leading to proteasomal degradation. Highest expression in adipose tissue.

Its subcellular location is the nucleus. It localises to the cytoplasm. Its activity is regulated as follows. PDPK1 activates its transcriptional activity independently of its kinase activity. Nuclear receptor that binds peroxisome proliferators such as hypolipidemic drugs and fatty acids. Once activated by a ligand, the nuclear receptor binds to DNA specific PPAR response elements (PPRE) and modulates the transcription of its target genes, such as acyl-CoA oxidase. It therefore controls the peroxisomal beta-oxidation pathway of fatty acids. Key regulator of adipocyte differentiation and glucose homeostasis. ARF6 acts as a key regulator of the tissue-specific adipocyte P2 (aP2) enhancer. Acts as a critical regulator of gut homeostasis by suppressing NF-kappa-B-mediated pro-inflammatory responses. Plays a role in the regulation of cardiovascular circadian rhythms by regulating the transcription of BMAL1 in the blood vessels. This is Peroxisome proliferator-activated receptor gamma (Pparg) from Rattus norvegicus (Rat).